A 182-amino-acid chain; its full sequence is Adenine phosphoribosyltransferase (182 aa).

It belongs to the purine/pyrimidine phosphoribosyltransferase family. In terms of assembly, homodimer.

It localises to the cytoplasm. The catalysed reaction is AMP + diphosphate = 5-phospho-alpha-D-ribose 1-diphosphate + adenine. It functions in the pathway purine metabolism; AMP biosynthesis via salvage pathway; AMP from adenine: step 1/1. Catalyzes a salvage reaction resulting in the formation of AMP, that is energically less costly than de novo synthesis. The protein is Adenine phosphoribosyltransferase of Wolinella succinogenes (strain ATCC 29543 / DSM 1740 / CCUG 13145 / JCM 31913 / LMG 7466 / NCTC 11488 / FDC 602W) (Vibrio succinogenes).